The chain runs to 931 residues: MAWTEKDVENGKESESLGNNGFLKGGQSSSGSKGSPGRISHVKKIFEDKDAITYANILRSRNKFVDALAIYESVLEKDSKSIESLIGKGICLQMQNTGRLAFESFSEAIKVDPQNACALTHCGILYKDEGRLVEAAESYEKALKADPSYTPAAECLAIVLTDIGTSLKLAGNTQEGIQKYYEAIKIDSHYAPAYYNLGVVYSEMMQYDMALNCYEKAALERPMYAEAYCNMGVIFKNRGDLESAIACYERCLAVSPNFEIAKNNMAIALTDLGTKVKLEGDINQGVAYYKKALCYNWHYADAMYNLGVAYGEMLKFDMAIVFYELAFHFNPHCAEACNNLGVIYKDRDNLDKAVECYQLALSIKPNFSQSLNNLGVVYTVQGKMDAAASMIEKAIIANPTYAEAYNNLGVLYRDAGNISLAIEAYEQCLKIDPDSRNAGQNRLLAMNYINEGTDDKLYEAHRDWGRRFMKLYPQYTSWDNSKVPERPLVIGYVSPDYFTHSVSYFIEAPLAHHDYTNYKVVVYSSVVKADAKTNRFRDKVMKKGGLWRDIYGIDEKKVSSMIREDKVDIMVELTGHTANNKLGTMACRPAPVQVTWIGYPNTTGLPTIDYRITDAMADPPNAKQKHVEELVRLPNSFLCYTPSPEAGPVCPAPALSNGFVTFGSFNNLAKITPKVLKVWARILSAVPHSRLIVKCKPFCCDSVRQRFLSILEQLGLEPQRVDLLPLILLNHDHMQAYSLMDISLDTFPYAGTTTTCESLYMGVPCVTMGGSVHAHNVGVSLLKTVGLENLVARNEDEYVESAIQLASDVTSLSNLRMSLRELMSKSPLCDGAKFTRNIESIYRSMWRRYCDGDVPSLRRMELLQQQQTQTESVVPEESSVNPSERTITSAPTDGSIKENGFTAVPALALKSSTSEENGVQSNHNGNHGNLS.

A compositionally biased stretch (basic and acidic residues) spans 1-15 (MAWTEKDVENGKESE). The interval 1 to 38 (MAWTEKDVENGKESESLGNNGFLKGGQSSSGSKGSPGR) is disordered. Positions 25 to 37 (GGQSSSGSKGSPG) are enriched in low complexity. TPR repeat units follow at residues 48–81 (DKDA…DSKS), 82–115 (IESL…DPQN), 116–149 (ACAL…DPSY), 157–190 (AIVL…DSHY), 191–224 (APAY…RPMY), 225–258 (AEAY…SPNF), 266–299 (AIAL…NWHY), 300–333 (ADAM…NPHC), 334–367 (AEAC…KPNF), 369–401 (QSLN…NPTY), and 402–435 (AEAY…DPDS). The tract at residues 436 to 931 (RNAGQNRLLA…NHNGNHGNLS (496 aa)) is catalytic region. The span at 864 to 884 (QQQQTQTESVVPEESSVNPSE) shows a compositional bias: low complexity. Positions 864–931 (QQQQTQTESV…NHNGNHGNLS (68 aa)) are disordered. The segment covering 910–931 (KSSTSEENGVQSNHNGNHGNLS) has biased composition (polar residues).

The protein belongs to the glycosyltransferase 41 family. O-GlcNAc transferase subfamily.

The protein localises to the nucleus. The enzyme catalyses L-seryl-[protein] + UDP-N-acetyl-alpha-D-glucosamine = 3-O-(N-acetyl-beta-D-glucosaminyl)-L-seryl-[protein] + UDP + H(+). It catalyses the reaction L-threonyl-[protein] + UDP-N-acetyl-alpha-D-glucosamine = 3-O-(N-acetyl-beta-D-glucosaminyl)-L-threonyl-[protein] + UDP + H(+). It participates in protein modification; protein glycosylation. In terms of biological role, probable O-linked N-acetylglucosamine transferase (OGT) involved in various processes such as gibberellin (GA) signaling pathway. OGTs catalyze the addition of nucleotide-activated sugars directly onto the polypeptide through O-glycosidic linkage with the hydroxyl of serine or threonine. Probably acts by adding O-linked sugars to yet unknown proteins. The polypeptide is Probable UDP-N-acetylglucosamine--peptide N-acetylglucosaminyltransferase SPINDLY (SPY) (Solanum lycopersicum (Tomato)).